We begin with the raw amino-acid sequence, 226 residues long: Late protein I226R (226 aa).

An N-terminal signal peptide occupies residues 1 to 16; the sequence is MKMETFLVCLFHNAAG. The N-linked (GlcNAc...) asparagine; by host glycan is linked to Asn164.

This sequence belongs to the asfivirus I226R family.

Plays a role in the inhibition of host NF-kappa-B and IRF3 signaling pathways. Mechanistically, promotes the degradation of host IKBKG through enhancing its ubiquitination leading to inhibition of both pathways. This African swine fever virus (isolate Pig/Kenya/KEN-50/1950) (ASFV) protein is Late protein I226R.